A 390-amino-acid chain; its full sequence is Homoserine O-succinyltransferase (390 aa).

The region spanning 59-369 is the AB hydrolase-1 domain; that stretch reads NAVLVCHALN…PHGHDAFLLD (311 aa). Ser-165 functions as the Nucleophile in the catalytic mechanism. Arg-235 lines the substrate pocket. Catalysis depends on residues Asp-330 and His-363. Asp-364 is a binding site for substrate.

This sequence belongs to the AB hydrolase superfamily. MetX family. In terms of assembly, homodimer.

Its subcellular location is the cytoplasm. The enzyme catalyses L-homoserine + succinyl-CoA = O-succinyl-L-homoserine + CoA. It functions in the pathway amino-acid biosynthesis; L-methionine biosynthesis via de novo pathway; O-succinyl-L-homoserine from L-homoserine: step 1/1. Transfers a succinyl group from succinyl-CoA to L-homoserine, forming succinyl-L-homoserine. This Cupriavidus metallidurans (strain ATCC 43123 / DSM 2839 / NBRC 102507 / CH34) (Ralstonia metallidurans) protein is Homoserine O-succinyltransferase.